Reading from the N-terminus, the 792-residue chain is Ribonucleoside-diphosphate reductase large subunit (792 aa).

The 92-residue stretch at 1–92 (MHVIKRDGRQ…VSNLHKETKK (92 aa)) folds into the ATP-cone domain. ATP contacts are provided by residues 5-6 (KR), 11-17 (ERVMFDK), threonine 53, and aspartate 57. Position 17 is an N6-acetyllysine (lysine 17). GDP is bound by residues serine 202 and serine 217. A disulfide bond links cysteine 218 and cysteine 444. DTTP-binding positions include 226–228 (DSI), lysine 243, arginine 256, and 263–264 (AG). Lysine 376 carries the post-translational modification N6-acetyllysine. Residue asparagine 427 participates in GDP binding. Asparagine 427 acts as the Proton acceptor in catalysis. Cysteine 429 acts as the Cysteine radical intermediate in catalysis. GDP is bound by residues glutamate 431 and 604–607 (TAST). Glutamate 431 functions as the Proton acceptor in the catalytic mechanism. At threonine 751 the chain carries Phosphothreonine.

This sequence belongs to the ribonucleoside diphosphate reductase large chain family. In terms of assembly, heterodimer of a large and a small subunit. Heterodimer with small subunit RRM2 or RRM2B. The heterodimer with RRM2 has higher catalytic activity than the heterodimer with RRM2B. Interacts with AHCYL1 which inhibits its activity.

The protein resides in the cytoplasm. The catalysed reaction is a 2'-deoxyribonucleoside 5'-diphosphate + [thioredoxin]-disulfide + H2O = a ribonucleoside 5'-diphosphate + [thioredoxin]-dithiol. Its activity is regulated as follows. Under complex allosteric control mediated by deoxynucleoside triphosphates and ATP binding to separate specificity and activation sites on the M1 subunit. The type of nucleotide bound at the specificity site determines substrate preference. It seems probable that ATP makes the enzyme reduce CDP and UDP, dGTP favors ADP reduction and dTTP favors GDP reduction. Stimulated by ATP and inhibited by dATP binding to the activity site, the dATP inhibition is mediated by AHCYL1 which stabilizes dATP in the site. Provides the precursors necessary for DNA synthesis. Catalyzes the biosynthesis of deoxyribonucleotides from the corresponding ribonucleotides. This chain is Ribonucleoside-diphosphate reductase large subunit (RRM1), found in Homo sapiens (Human).